Here is a 343-residue protein sequence, read N- to C-terminus: Methionine import ATP-binding protein MetN (343 aa).

Residues 2 to 241 form the ABC transporter domain; the sequence is IKLFHINKIF…PKTPIAQAFI (240 aa). Position 38–45 (38–45) interacts with ATP; the sequence is GSSGAGKS.

The protein belongs to the ABC transporter superfamily. Methionine importer (TC 3.A.1.24) family. The complex is composed of two ATP-binding proteins (MetN), two transmembrane proteins (MetI) and a solute-binding protein (MetQ).

The protein resides in the cell inner membrane. The enzyme catalyses L-methionine(out) + ATP + H2O = L-methionine(in) + ADP + phosphate + H(+). The catalysed reaction is D-methionine(out) + ATP + H2O = D-methionine(in) + ADP + phosphate + H(+). In terms of biological role, part of the ABC transporter complex MetNIQ involved in methionine import. Responsible for energy coupling to the transport system. The sequence is that of Methionine import ATP-binding protein MetN from Photorhabdus laumondii subsp. laumondii (strain DSM 15139 / CIP 105565 / TT01) (Photorhabdus luminescens subsp. laumondii).